Here is a 652-residue protein sequence, read N- to C-terminus: Acetyl-coenzyme A synthetase (652 aa).

CoA contacts are provided by residues 191–194 and threonine 311; that span reads RAGN. Residues 387–389, 411–416, aspartate 503, and arginine 518 contribute to the ATP site; these read GEP and DTWWQT. Serine 526 is a CoA binding site. Arginine 529 is an ATP binding site. Mg(2+) contacts are provided by valine 540, histidine 542, and valine 545. CoA is bound at residue arginine 587. Lysine 613 is subject to N6-acetyllysine.

This sequence belongs to the ATP-dependent AMP-binding enzyme family. Mg(2+) serves as cofactor. Acetylated. Deacetylation by the SIR2-homolog deacetylase activates the enzyme.

It carries out the reaction acetate + ATP + CoA = acetyl-CoA + AMP + diphosphate. Its function is as follows. Catalyzes the conversion of acetate into acetyl-CoA (AcCoA), an essential intermediate at the junction of anabolic and catabolic pathways. AcsA undergoes a two-step reaction. In the first half reaction, AcsA combines acetate with ATP to form acetyl-adenylate (AcAMP) intermediate. In the second half reaction, it can then transfer the acetyl group from AcAMP to the sulfhydryl group of CoA, forming the product AcCoA. This Marinomonas sp. (strain MWYL1) protein is Acetyl-coenzyme A synthetase.